The chain runs to 1181 residues: Sodium/potassium/calcium exchanger 1 (1181 aa).

At 1–419 the chain is on the extracellular side; sequence MGKLIRMGTQ…DLFSVEDRRQ (419 aa). Disordered stretches follow at residues 107–232, 255–276, and 300–323; these read AMED…TSLK, SLVGKNTLGSPRRGERNSSTTP, and STPATTEGSTAAQRIGNPLSGTST. Over residues 124-136 the composition is skewed to polar residues; it reads SLKNNYSPTTAGT. N-linked (GlcNAc...) asparagine glycosylation is present at asparagine 271. The segment covering 301 to 311 has biased composition (polar residues); the sequence is TPATTEGSTAA. Residues 420-440 traverse the membrane as a helical segment; sequence GWVVLHIFGMTYVFVALAIVC. Residues 441-464 lie on the Cytoplasmic side of the membrane; it reads DEYFVPALGVITDKLQISEDVAGA. An Alpha-1 repeat occupies 461–501; sequence VAGATFMAAGGSAPELFTSLIGVFISHSNVGIGTIVGSAVF. The chain crosses the membrane as a helical span at residues 465-485; it reads TFMAAGGSAPELFTSLIGVFI. Residues 486–491 are Extracellular-facing; sequence SHSNVG. Residues 492–512 form a helical membrane-spanning segment; sequence IGTIVGSAVFNILFVIGTCAL. The Cytoplasmic portion of the chain corresponds to 513 to 519; the sequence is FSREILN. Residues 520–544 traverse the membrane as a helical segment; sequence LTWWPLFRDVSFYILDLSMLIVFFL. The Extracellular portion of the chain corresponds to 545–552; that stretch reads DSLIAWWE. Residues 553–569 traverse the membrane as a helical segment; sequence SLLLLLAYALYVFTMKW. The Cytoplasmic segment spans residues 570-989; the sequence is NKQIERWVKE…SLEWPESRQK (420 aa). The interval 598 to 617 is disordered; it reads PSDGAIEENEQQDNKKLKLP. Position 625 is a phosphoserine (serine 625). Residues 650–983 are disordered; the sequence is GEARPSKDKQ…ESEEPLSLEW (334 aa). Phosphothreonine is present on threonine 690. Over residues 701–715 the composition is skewed to acidic residues; the sequence is GDQEEDPGCQEDVDE. 14 consecutive repeat copies span residues 730–741, 742–754, 755–766, 767–778, 779–791, 792–804, 805–817, 818–830, 831–843, 844–856, 857–869, 870–881, 882–893, and 894–905. Composition is skewed to basic and acidic residues over residues 730–750, 757–775, and 782–805; these read ETEAEGKKDEEGETEAERKED, ETKGKEKQEGETESEGKDE, and AEGKEADHEGETEAEGKEVEHEGE. The 14 X approximate tandem repeats stretch occupies residues 730–905; the sequence is ETEAEGKKDE…EAGEKDEHEG (176 aa). Acidic residues predominate over residues 806 to 820; that stretch reads TEAEGTEDEQEGETE. Basic and acidic residues predominate over residues 834–906; that stretch reads AEGKEVEHEV…AGEKDEHEGQ (73 aa). Acidic residues-rich tracts occupy residues 921–931 and 949–979; these read GEAEANAEDQC and GDSEEEEDEEDEEEEEEEEEEEEEEESEEPL. The helical transmembrane segment at 990-1010 threads the bilayer; that stretch reads QAIYLFLLPIVFPLWLTIPDV. Residues 1011-1017 lie on the Extracellular side of the membrane; it reads RRQEARK. Residues 1018-1038 traverse the membrane as a helical segment; sequence FFVITFLGSIIWIAMFSYLMV. Over 1039–1053 the chain is Cytoplasmic; sequence WWAHQVGETIGISEE. Residues 1054–1074 form a helical membrane-spanning segment; that stretch reads IMGLTILAAGTSIPDLITSVI. Residues 1061-1092 form an Alpha-2 repeat; that stretch reads AAGTSIPDLITSVIVARKGLGDMAVSSSVGSN. The Extracellular segment spans residues 1075–1092; sequence VARKGLGDMAVSSSVGSN. The helical transmembrane segment at 1093–1113 threads the bilayer; that stretch reads IFDITVGLPVPWLLFSLINAL. Residues 1114-1121 are Cytoplasmic-facing; sequence QPIPVSSN. Residues 1122 to 1142 traverse the membrane as a helical segment; that stretch reads GLFCAIVLLFLMLLFVIFSIA. Residues 1143–1150 lie on the Extracellular side of the membrane; sequence SCKWRMNK. Residues 1151-1171 traverse the membrane as a helical segment; the sequence is ILGFTMFLLYFVFLVISVMLE. Residues 1172–1181 lie on the Cytoplasmic side of the membrane; it reads DRIISCPVSV.

It belongs to the Ca(2+):cation antiporter (CaCA) (TC 2.A.19) family. SLC24A subfamily. In terms of processing, the uncleaved signal sequence is required for efficient membrane targeting and proper membrane integration and topology. As to expression, highly expressed in the eye.

The protein resides in the cell membrane. It catalyses the reaction Ca(2+)(out) + K(+)(out) + 4 Na(+)(in) = Ca(2+)(in) + K(+)(in) + 4 Na(+)(out). Its function is as follows. Calcium, potassium:sodium antiporter that transports 1 Ca(2+) and 1 K(+) in exchange for 4 Na(+). Critical component of the visual transduction cascade, controlling the calcium concentration of outer segments during light and darkness. Light causes a rapid lowering of cytosolic free calcium in the outer segment of both retinal rod and cone photoreceptors and the light-induced lowering of calcium is caused by extrusion via this protein which plays a key role in the process of light adaptation. The protein is Sodium/potassium/calcium exchanger 1 (Slc24a1) of Rattus norvegicus (Rat).